A 250-amino-acid polypeptide reads, in one-letter code: Methylthioribulose-1-phosphate dehydratase (250 aa).

A substrate-binding site is contributed by C103. Residues H121 and H123 each contribute to the Zn(2+) site. Residue E146 is the Proton donor/acceptor of the active site. H211 is a Zn(2+) binding site.

It belongs to the aldolase class II family. MtnB subfamily. It depends on Zn(2+) as a cofactor.

It localises to the cytoplasm. It carries out the reaction 5-(methylsulfanyl)-D-ribulose 1-phosphate = 5-methylsulfanyl-2,3-dioxopentyl phosphate + H2O. It participates in amino-acid biosynthesis; L-methionine biosynthesis via salvage pathway; L-methionine from S-methyl-5-thio-alpha-D-ribose 1-phosphate: step 2/6. Catalyzes the dehydration of methylthioribulose-1-phosphate (MTRu-1-P) into 2,3-diketo-5-methylthiopentyl-1-phosphate (DK-MTP-1-P). The sequence is that of Methylthioribulose-1-phosphate dehydratase from Clavispora lusitaniae (strain ATCC 42720) (Yeast).